The following is a 533-amino-acid chain: Sterol 26-hydroxylase, mitochondrial (533 aa).

The transit peptide at 1–32 directs the protein to the mitochondrion; it reads MAAWSRTRLRWTLLDPRVVGRGLCPQGARAKA. The tract at residues 34 to 60 is disordered; the sequence is IPAALQAQESTEGPGTGQDRPRLRSPA. N6-acetyllysine is present on residues Lys142, Lys232, Lys285, Lys296, and Lys375. The segment at 386-400 is sterol-binding; that stretch reads PLLKAVIKETLRLYP. Residue Cys479 participates in heme binding. An N6-acetyllysine mark is found at Lys512 and Lys523.

This sequence belongs to the cytochrome P450 family. As to quaternary structure, interacts with HSP70; this interaction is required for initial targeting to mitochondria. It depends on heme as a cofactor. Post-translationally, acetylation of Lys-125 and Lys-285 is observed in liver mitochondria from fasted mice but not from fed mice. Expressed in the gray and white matter of cerebellum (at protein level).

Its subcellular location is the mitochondrion inner membrane. It catalyses the reaction 5beta-cholestane-3alpha,7alpha,12alpha-triol + 6 reduced [adrenodoxin] + 3 O2 + 5 H(+) = (25R)-3alpha,7alpha,12alpha-trihydroxy-5beta-cholestan-26-oate + 6 oxidized [adrenodoxin] + 4 H2O. The enzyme catalyses cholestanol + 2 reduced [adrenodoxin] + O2 + 2 H(+) = (25R)-26-hydroxycholestanol + 2 oxidized [adrenodoxin] + H2O. The catalysed reaction is (25R)-3beta-hydroxycholest-5-en-7-one-26-al + 2 reduced [adrenodoxin] + O2 + H(+) = (25R)-3beta-hydroxycholest-5-en-7-one-26-oate + 2 oxidized [adrenodoxin] + H2O. It carries out the reaction (25R)-3beta,26-dihydroxycholest-5-en-7-one + 2 reduced [adrenodoxin] + O2 + 2 H(+) = (25R)-3beta-hydroxycholest-5-en-7-one-26-al + 2 oxidized [adrenodoxin] + 2 H2O. It catalyses the reaction 7-oxocholesterol + 2 reduced [adrenodoxin] + O2 + 2 H(+) = (25R)-3beta,26-dihydroxycholest-5-en-7-one + 2 oxidized [adrenodoxin] + H2O. The enzyme catalyses calciol + 2 reduced [adrenodoxin] + O2 + 2 H(+) = calcidiol + 2 oxidized [adrenodoxin] + H2O. The catalysed reaction is (25R)-5beta-cholestane-3alpha,7alpha,12alpha,26-tetrol + 2 reduced [adrenodoxin] + O2 + 2 H(+) = (25R)-3alpha,7alpha,12alpha-trihydroxy-5beta-cholestan-26-al + 2 oxidized [adrenodoxin] + 2 H2O. It carries out the reaction 2 reduced [adrenodoxin] + cholesterol + O2 + 2 H(+) = (25R)-cholest-5-ene-3beta,26-diol + 2 oxidized [adrenodoxin] + H2O. It catalyses the reaction (25R)-3beta,4beta-dihydroxycholest-5-en-26-al + 2 reduced [adrenodoxin] + O2 + H(+) = (25R)-3beta,4beta-dihydroxycholest-5-en-26-oate + 2 oxidized [adrenodoxin] + H2O. The enzyme catalyses (25R)-4beta,26-dihydroxycholesterol + 2 reduced [adrenodoxin] + O2 + 2 H(+) = (25R)-3beta,4beta-dihydroxycholest-5-en-26-al + 2 oxidized [adrenodoxin] + 2 H2O. The catalysed reaction is 4beta-hydroxycholesterol + 2 reduced [adrenodoxin] + O2 + 2 H(+) = (25R)-4beta,26-dihydroxycholesterol + 2 oxidized [adrenodoxin] + H2O. It carries out the reaction (25R)-3beta-hydroxy-5-cholesten-26-al + 2 reduced [adrenodoxin] + O2 + H(+) = (25R)-3beta-hydroxy-5-cholestenoate + 2 oxidized [adrenodoxin] + H2O. It catalyses the reaction (25R)-cholest-5-ene-3beta,26-diol + 2 reduced [adrenodoxin] + O2 + 2 H(+) = (25R)-3beta-hydroxy-5-cholesten-26-al + 2 oxidized [adrenodoxin] + 2 H2O. The enzyme catalyses (25R)-3alpha,7alpha,12alpha-trihydroxy-5beta-cholestan-26-al + 2 reduced [adrenodoxin] + O2 + H(+) = (25R)-3alpha,7alpha,12alpha-trihydroxy-5beta-cholestan-26-oate + 2 oxidized [adrenodoxin] + H2O. The catalysed reaction is 5beta-cholestane-3alpha,7alpha,12alpha-triol + 2 reduced [adrenodoxin] + O2 + 2 H(+) = (25R)-5beta-cholestane-3alpha,7alpha,12alpha,26-tetrol + 2 oxidized [adrenodoxin] + H2O. It participates in hormone biosynthesis; cholecalciferol biosynthesis. Its pathway is steroid metabolism; cholesterol degradation. It functions in the pathway lipid metabolism; bile acid biosynthesis. Functionally, cytochrome P450 monooxygenase that catalyzes regio- and stereospecific hydroxylation of cholesterol and its derivatives. Hydroxylates (with R stereochemistry) the terminal methyl group of cholesterol side-chain in a three step reaction to yield at first a C26 alcohol, then a C26 aldehyde and finally a C26 acid. Regulates cholesterol homeostasis by catalyzing the conversion of excess cholesterol to bile acids via both the 'neutral' (classic) and the 'acid' (alternative) pathways. May also regulate cholesterol homeostasis via generation of active oxysterols, which act as ligands for NR1H2 and NR1H3 nuclear receptors, modulating the transcription of genes involved in lipid metabolism. Plays a role in cholestanol metabolism in the cerebellum. Similarly to cholesterol, hydroxylates cholestanol and may facilitate sterol diffusion through the blood-brain barrier to the systemic circulation for further degradation. Also hydroxylates retinal 7-ketocholesterol, a noxious oxysterol with pro-inflammatory and pro-apoptotic effects, and may play a role in its elimination from the retinal pigment epithelium. May play a redundant role in vitamin D biosynthesis. Catalyzes 25-hydroxylation of vitamin D3 that is required for its conversion to a functionally active form. The chain is Sterol 26-hydroxylase, mitochondrial from Mus musculus (Mouse).